A 499-amino-acid polypeptide reads, in one-letter code: Glucose-6-phosphate exchanger SLC37A2 (499 aa).

A helical transmembrane segment spans residues 21–40; sequence YRGFIIVMTFLFYTCYHMSR. 3 N-linked (GlcNAc...) asparagine glycosylation sites follow: asparagine 53, asparagine 62, and asparagine 66. 11 helical membrane-spanning segments follow: residues 86-106, 116-136, 138-158, 187-207, 208-228, 302-322, 334-354, 362-382, 391-411, 434-454, and 458-478; these read GSLD…SGIF, LSGG…GYYW, IHAL…QTTG, AVGN…AWGL, SFIV…FFLV, LCLL…PLYI, GDLS…AGGI, AITC…YNYL, VAML…ITTA, AIID…AGVL, and GWNY…LLLV.

The protein belongs to the major facilitator superfamily. Organophosphate:Pi antiporter (OPA) (TC 2.A.1.4) family.

The protein resides in the endoplasmic reticulum membrane. The catalysed reaction is D-glucose 6-phosphate(in) + phosphate(out) = D-glucose 6-phosphate(out) + phosphate(in). Functionally, inorganic phosphate and glucose-6-phosphate antiporter. May transport cytoplasmic glucose-6-phosphate into the lumen of the endoplasmic reticulum and translocate inorganic phosphate into the opposite direction. The polypeptide is Glucose-6-phosphate exchanger SLC37A2 (Xenopus tropicalis (Western clawed frog)).